We begin with the raw amino-acid sequence, 824 residues long: Tuftelin-interacting protein 11 (824 aa).

Residues 1–135 (MSMSHLYGKD…RTFAGGIKSN (135 aa)) are disordered. Acidic residues predominate over residues 11 to 25 (EDSDGVEMENFEITD). Basic and acidic residues-rich tracts occupy residues 41–61 (QTKE…DERP) and 85–114 (PAAE…EAKK). The span at 122-135 (KPSQRTFAGGIKSN) shows a compositional bias: polar residues. Residues 145 to 191 (TKGIGQKLLQKMGYMPGRGLGKNAQGIIAPIEAKQRRGKGAVGAYGS) form the G-patch domain.

The protein belongs to the TFP11/STIP family. As to quaternary structure, identified in the spliceosome C complex.

The protein resides in the nucleus. Involved in pre-mRNA splicing, specifically in spliceosome disassembly during late-stage splicing events. This is Tuftelin-interacting protein 11 (tfip11) from Xenopus laevis (African clawed frog).